The sequence spans 931 residues: NEDD4-binding protein 1 (931 aa).

A KH-like domain is found at 75-159 (GKAVRSAKEY…VQQFVKLFEN (85 aa)). Disordered stretches follow at residues 289-329 (MTSK…HNDS), 413-474 (QEWS…TQVD), and 547-571 (CTSA…NSHS). Basic and acidic residues-rich tracts occupy residues 290–309 (TSKE…ESLP) and 319–329 (QEVKSVSHNDS). Polar residues predominate over residues 416–434 (SSKTPKTTNLRLGSNANSS). Basic and acidic residues-rich tracts occupy residues 435–444 (HKLEDEDISC) and 456–467 (NETRTERHKARD). A compositionally biased stretch (polar residues) spans 547-557 (CTSAKSKTAVH). Residues 659–811 (LKHIIIDGSN…LGRNGPRLDD (153 aa)) enclose the RNase NYN domain. A disordered region spans residues 841–863 (LFMHVPNPASSSQQPKNRAHGDH). Positions 884 to 931 (RSASETVWLREALIKIFPDYEQRQKIDKILADHPFMRDLNALSAMVLD) are coCUN.

The protein belongs to the N4BP1 family.

The protein localises to the cytoplasm. Its subcellular location is the cytosol. The protein resides in the nucleus. It localises to the nucleolus. It is found in the PML body. Potent suppressor of cytokine production that acts as a regulator of innate immune signaling and inflammation. Acts as a key negative regulator of select cytokine and chemokine responses elicited by TRIF-independent Toll-like receptors (TLRs), thereby limiting inflammatory cytokine responses to minor insults. Has ribonuclease activity. The chain is NEDD4-binding protein 1 from Gallus gallus (Chicken).